We begin with the raw amino-acid sequence, 305 residues long: Homoserine O-acetyltransferase (305 aa).

C142 functions as the Acyl-thioester intermediate in the catalytic mechanism. Substrate is bound by residues K163 and S192. Catalysis depends on H235, which acts as the Proton acceptor. The active site involves E237. Position 249 (R249) interacts with substrate.

It belongs to the MetA family.

Its subcellular location is the cytoplasm. It catalyses the reaction L-homoserine + acetyl-CoA = O-acetyl-L-homoserine + CoA. It functions in the pathway amino-acid biosynthesis; L-methionine biosynthesis via de novo pathway; O-acetyl-L-homoserine from L-homoserine: step 1/1. Its function is as follows. Transfers an acetyl group from acetyl-CoA to L-homoserine, forming acetyl-L-homoserine. The protein is Homoserine O-acetyltransferase of Dinoroseobacter shibae (strain DSM 16493 / NCIMB 14021 / DFL 12).